A 463-amino-acid polypeptide reads, in one-letter code: A-type ATP synthase subunit B (463 aa).

This sequence belongs to the ATPase alpha/beta chains family. In terms of assembly, has multiple subunits with at least A(3), B(3), C, D, E, F, H, I and proteolipid K(x).

It is found in the cell membrane. Functionally, component of the A-type ATP synthase that produces ATP from ADP in the presence of a proton gradient across the membrane. The B chain is a regulatory subunit. The protein is A-type ATP synthase subunit B of Thermococcus sp. (strain KI).